Here is a 121-residue protein sequence, read N- to C-terminus: Basic phospholipase A2 homolog piratoxin-2 (121 aa).

7 disulfide bridges follow: cysteine 26-cysteine 115, cysteine 28-cysteine 44, cysteine 43-cysteine 95, cysteine 49-cysteine 121, cysteine 50-cysteine 88, cysteine 57-cysteine 81, and cysteine 75-cysteine 86. Residues 105 to 117 (KKYRYHLKPFCKK) form an important for membrane-damaging activities in eukaryotes and bacteria; heparin-binding region.

The protein belongs to the phospholipase A2 family. Group II subfamily. K49 sub-subfamily. Homodimer; non-covalently linked. Expressed by the venom gland.

It localises to the secreted. Snake venom phospholipase A2 (PLA2) homolog that lacks enzymatic activity. Shows myotoxic activity and edema-inducing activities in vivo. A model of myotoxic mechanism has been proposed: an apo Lys49-PLA2 is activated by the entrance of a hydrophobic molecule (e.g. fatty acid) at the hydrophobic channel of the protein leading to a reorientation of a monomer. This reorientation causes a transition between 'inactive' to 'active' states, causing alignment of C-terminal and membrane-docking sites (MDoS) side-by-side and putting the membrane-disruption sites (MDiS) in the same plane, exposed to solvent and in a symmetric position for both monomers. The MDoS region stabilizes the toxin on membrane by the interaction of charged residues with phospholipid head groups. Subsequently, the MDiS region destabilizes the membrane with penetration of hydrophobic residues. This insertion causes a disorganization of the membrane, allowing an uncontrolled influx of ions (i.e. calcium and sodium), and eventually triggering irreversible intracellular alterations and cell death. This is Basic phospholipase A2 homolog piratoxin-2 from Bothrops pirajai (Piraja's lancehead).